Consider the following 197-residue polypeptide: Class A basic helix-loop-helix protein 15 (197 aa).

The segment covering 1 to 12 (MKTKNRPPRRRT) has biased composition (basic residues). Disordered regions lie at residues 1–82 (MKTK…ERER) and 175–197 (TEDQ…REGS). Threonine 12 and threonine 25 each carry phosphothreonine. Over residues 27–36 (DRSQSGSGAS) the composition is skewed to polar residues. Basic and acidic residues predominate over residues 65-82 (SRRENSVQRRLESNERER). One can recognise a bHLH domain in the interval 72–124 (QRRLESNERERQRMHKLNNAFQALREVIPHVRADKKLSKIETLTLAKNYIKSL).

Forms homodimers or heterodimers with TCF3 gene products E12 and E47. These dimers bind to the E-box site, however, heterodimer with MYOD1 does not bind target DNA. As to expression, expressed in liver, spleen and olfactory epithelium. Weaker expression is seen in skeletal muscle, cardiac muscle, eye and brain tissue.

It localises to the nucleus. In terms of biological role, plays a role in controlling the transcriptional activity of MyoD, ensuring that expanding myoblast populations remain undifferentiated. Repression may occur through muscle-specific E-box occupancy by homodimers. May also negatively regulate bHLH-mediated transcription through an N-terminal repressor domain. Serves as a key regulator of acinar cell function, stability, and identity. Also required for normal organelle localization in exocrine cells and for mitochondrial calcium ion transport. May function as a unique regulator of gene expression in several different embryonic and postnatal cell lineages. Binds to the E-box consensus sequence 5'-CANNTG-3'. This chain is Class A basic helix-loop-helix protein 15 (Bhlha15), found in Rattus norvegicus (Rat).